Here is a 1006-residue protein sequence, read N- to C-terminus: Collagen alpha-2(I) chain (1006 aa).

Residues 1 to 84 are disordered; that stretch reads SGGFDFSFLP…GFPGTPGLPG (84 aa). A 4-hydroxyproline mark is found at Pro-10, Pro-13, Pro-35, and Pro-41. Residues 28–64 are compositionally biased toward low complexity; that stretch reads LMGPRGPPGASGAPGPQGFQGPAGEPGEPGQTGPAGA. 5-hydroxylysine; alternate is present on Lys-86. Lys-86 carries O-linked (Gal...) hydroxylysine; alternate glycosylation. The segment at 99 to 1006 is disordered; sequence GQPGAAGVKG…FGYEGDFYRA (908 aa). Low complexity-rich tracts occupy residues 142–163 and 209–230; these read SRGSDGSVGPVGPAGPIGSAGP and PGANGLTGAKGAAGLPGVAGAP. A compositionally biased stretch (gly residues) spans 264–273; sequence GESGGKGEPG. The span at 274-284 shows a compositional bias: low complexity; the sequence is SAGPQGPPGSS. Residues 306-315 show a composition bias toward gly residues; that stretch reads GLRGGPGSRG. The segment covering 328–344 has biased composition (low complexity); it reads PAGARGASGPAGVRGPS. 2 positions are modified to 4-hydroxyproline: Pro-350 and Pro-353. Low complexity predominate over residues 379–398; it reads LPGIDGRPGPIGPAGARGEA. Positions 447-456 are enriched in gly residues; that stretch reads GVQGGKGEQG. Composition is skewed to low complexity over residues 503–520 and 532–542; these read PGESGAVGPSGAIGSRGP and EPGVVGAPGTA. Over residues 543-552 the composition is skewed to gly residues; that stretch reads GPAGSGGLPG. Low complexity-rich tracts occupy residues 585 to 615 and 622 to 642; these read AVGAPGPAGATGDRGEAGAAGPAGPAGPRGS and VGPAGPNGFAGPAGAAGQPGA. Positions 643–652 are enriched in basic and acidic residues; that stretch reads KGERGTKGPK. Over residues 660–670 the composition is skewed to low complexity; the sequence is PTGPVGSAGPA. Positions 680 to 689 are enriched in gly residues; sequence GSRGDGGPPG. A compositionally biased stretch (low complexity) spans 691–700; sequence TGFPGAAGRT. Positions 737 to 746 are enriched in gly residues; it reads GETGAGGPPG. Low complexity-rich tracts occupy residues 754 to 781 and 789 to 799; these read SGEPGTAGPPGTAGPQGLLGAPGILGLP and LPGVAGAVGEP. The segment covering 800-810 has biased composition (gly residues); sequence GPLGIGPPGAR. Residues 837–882 are compositionally biased toward low complexity; the sequence is YAGNPGPVGAAGAPGPHGAVGPAGKHGNRGEPGPVGSAGPVGALGP. The span at 892 to 903 shows a compositional bias: basic and acidic residues; the sequence is RGDKGEAGDKGP. Residues 976–988 show a composition bias toward pro residues; sequence SGPPGPPGPPGPP.

Belongs to the fibrillar collagen family. In terms of assembly, trimers of one alpha 2(I) and two alpha 1(I) chains. Interacts (via C-terminus) with TMEM131 (via PapD-L domain); the interaction is direct and is involved in assembly and TRAPPIII ER-to-Golgi transport complex-dependent secretion of collagen. Prolines at the third position of the tripeptide repeating unit (G-X-Y) are hydroxylated in some or all of the chains. Expressed in bones.

The protein resides in the secreted. It localises to the extracellular space. The protein localises to the extracellular matrix. Type I collagen is a member of group I collagen (fibrillar forming collagen). In Choloepus hoffmanni (Hoffmann's two-fingered sloth), this protein is Collagen alpha-2(I) chain.